The chain runs to 111 residues: 2Fe-2S ferredoxin (111 aa).

A 2Fe-2S ferredoxin-type domain is found at 1–104; the sequence is MPKVLFLPHK…DIEVEIPLYN (104 aa). Cysteine 42, cysteine 48, cysteine 51, and cysteine 87 together coordinate [2Fe-2S] cluster.

This sequence belongs to the adrenodoxin/putidaredoxin family. Requires [2Fe-2S] cluster as cofactor.

Ferredoxin are iron-sulfur proteins that transfer electrons in a wide variety of metabolic reactions. The chain is 2Fe-2S ferredoxin (fdx) from Buchnera aphidicola subsp. Acyrthosiphon pisum (strain APS) (Acyrthosiphon pisum symbiotic bacterium).